A 621-amino-acid polypeptide reads, in one-letter code: MDFDAIVIGGGHAGIEAALALSRLNFKTLMITQNLDTIGKLSCNPAIGGLAKGNMVREIDALGGEMGRIIDFSMIQFRVLNKSRGPAVQAPRAQADKLMYQTKAKETLERQDNLDLFQDTVVDFLLNSMRNEIEGVVTERGNKFRSSVVVLTTGTFLRGKIFIGEYRADMGRLAEFSAYGLDKTLLGLGFEMGRLKTGTPARIHKKSVDFSKTEVQFGDSDIIPFSFSNGKLDKSQLSCYVTYTNKKTHEIISENMHLSPLYSGEIVGNGPRYCPSIEDKIVKFKDKDRHQIFIEPEGFNTEEMYLNGLSSSLPENIQQKLINSIEGLEHAVITRPGYAVEYDYINPIELYPNLESKRVKGLFIAGQTNGSSGYEEAAAQGLMAGINAALRLQNKKPMILTRTSSYIGVLIDDLVTKGTKEPYRMFTSRAEHRLNLRHDTSDKRLIKIGYDLGLVDEKRYSRYLFKESRVEEIKELLKQRRLSLKDVVDEQLKKHVSKDFYHILKDPSISLDNLIKIDPSLSDSKVILEQVELDVKYEGYINRQKDLIKRLDNLELVKLPFDFNYEIIEGLSREAREKFSKIQPATLAQASRIPGIRSTDITVLLIYFSNPKNKVVINFSL.

9–14 (GGGHAG) contacts FAD. 270–284 (GPRYCPSIEDKIVKF) is an NAD(+) binding site.

It belongs to the MnmG family. As to quaternary structure, homodimer. Heterotetramer of two MnmE and two MnmG subunits. FAD is required as a cofactor.

It is found in the cytoplasm. In terms of biological role, NAD-binding protein involved in the addition of a carboxymethylaminomethyl (cmnm) group at the wobble position (U34) of certain tRNAs, forming tRNA-cmnm(5)s(2)U34. The polypeptide is tRNA uridine 5-carboxymethylaminomethyl modification enzyme MnmG (Borreliella burgdorferi (strain ATCC 35210 / DSM 4680 / CIP 102532 / B31) (Borrelia burgdorferi)).